A 417-amino-acid chain; its full sequence is NADH-quinone oxidoreductase subunit D 2 (417 aa).

Belongs to the complex I 49 kDa subunit family. In terms of assembly, NDH-1 is composed of 14 different subunits. Subunits NuoB, C, D, E, F, and G constitute the peripheral sector of the complex.

It localises to the cell membrane. It catalyses the reaction a quinone + NADH + 5 H(+)(in) = a quinol + NAD(+) + 4 H(+)(out). In terms of biological role, NDH-1 shuttles electrons from NADH, via FMN and iron-sulfur (Fe-S) centers, to quinones in the respiratory chain. The immediate electron acceptor for the enzyme in this species is believed to be ubiquinone. Couples the redox reaction to proton translocation (for every two electrons transferred, four hydrogen ions are translocated across the cytoplasmic membrane), and thus conserves the redox energy in a proton gradient. This Roseiflexus sp. (strain RS-1) protein is NADH-quinone oxidoreductase subunit D 2.